The following is an 82-amino-acid chain: UPF0298 protein SMU_1670c (82 aa).

This sequence belongs to the UPF0298 family.

It localises to the cytoplasm. In Streptococcus mutans serotype c (strain ATCC 700610 / UA159), this protein is UPF0298 protein SMU_1670c.